A 734-amino-acid polypeptide reads, in one-letter code: Photosystem I P700 chlorophyll a apoprotein A2 (734 aa).

A run of 8 helical transmembrane segments spans residues 46–69 (IFAS…FHVA), 135–158 (LYTG…LHLQ), 175–199 (LNHH…HVAI), 273–291 (IAHH…GHMY), 330–353 (LHFQ…QHMY), 369–395 (AALY…IFFI), 417–439 (AIIS…LYVH), and 517–535 (FLVH…LILV). Residues C559 and C568 each coordinate [4Fe-4S] cluster. Transmembrane regions (helical) follow at residues 575-596 (AFYL…YWHW) and 643-665 (LSVW…MFLI). Positions 654, 662, and 670 each coordinate chlorophyll a. W671 provides a ligand contact to phylloquinone. A helical membrane pass occupies residues 707–727 (LVGLAHFSVGYIFTYAAFLIA).

It belongs to the PsaA/PsaB family. As to quaternary structure, the PsaA/B heterodimer binds the P700 chlorophyll special pair and subsequent electron acceptors. PSI consists of a core antenna complex that captures photons, and an electron transfer chain that converts photonic excitation into a charge separation. The eukaryotic PSI reaction center is composed of at least 11 subunits. P700 is a chlorophyll a/chlorophyll a' dimer, A0 is one or more chlorophyll a, A1 is one or both phylloquinones and FX is a shared 4Fe-4S iron-sulfur center. serves as cofactor.

It localises to the plastid. Its subcellular location is the chloroplast thylakoid membrane. It carries out the reaction reduced [plastocyanin] + hnu + oxidized [2Fe-2S]-[ferredoxin] = oxidized [plastocyanin] + reduced [2Fe-2S]-[ferredoxin]. Its function is as follows. PsaA and PsaB bind P700, the primary electron donor of photosystem I (PSI), as well as the electron acceptors A0, A1 and FX. PSI is a plastocyanin-ferredoxin oxidoreductase, converting photonic excitation into a charge separation, which transfers an electron from the donor P700 chlorophyll pair to the spectroscopically characterized acceptors A0, A1, FX, FA and FB in turn. Oxidized P700 is reduced on the lumenal side of the thylakoid membrane by plastocyanin. The chain is Photosystem I P700 chlorophyll a apoprotein A2 from Solanum bulbocastanum (Wild potato).